Consider the following 1320-residue polypeptide: Immunoglobulin superfamily member 1 (1320 aa).

The N-terminal stretch at 1-18 is a signal peptide; the sequence is MMLRTFTLLLLCIWLNRG. Residues 19 to 504 lie on the Extracellular side of the membrane; the sequence is MTSMAAVESQ…LPWNSILNEA (486 aa). 5 consecutive Ig-like C2-type domains span residues 29 to 113, 115 to 212, 224 to 308, 312 to 399, and 401 to 482; these read PELW…KILE, EAPG…KLVV, HPGP…IWVT, PKTW…ATYN, and VELI…HRSE. Asn-44 carries an N-linked (GlcNAc...) asparagine glycan. Cys-49 and Cys-97 are disulfide-bonded. Asn-329, Asn-365, and Asn-372 each carry an N-linked (GlcNAc...) asparagine glycan. Intrachain disulfides connect Cys-334–Cys-383 and Cys-423–Cys-466. The helical transmembrane segment at 505 to 525 threads the bilayer; the sequence is IRVSLTVQFLSLLLLVLWLQW. Residues 526 to 534 are Cytoplasmic-facing; the sequence is KCRRLRLRE. Residues 535-555 form a helical membrane-spanning segment; that stretch reads AWLLGTAQGVAMLVILIALLC. The Extracellular segment spans residues 556 to 1320; sequence CGLCNGALTE…GVSVEQTVPI (765 aa). Ig-like C2-type domains are found at residues 572–665, 662–756, 761–853, 857–942, 949–1044, 1049–1134, and 1145–1226; these read PTPK…VGTD, VGTD…ELVI, PKPF…LIVT, PKPT…YLST, TDTF…ELIV, PKPS…NHSN, and PKPS…EPSD. N-linked (GlcNAc...) asparagine glycosylation is found at Asn-591, Asn-731, Asn-782, Asn-830, Asn-874, Asn-923, Asn-970, Asn-1011, and Asn-1066. An intrachain disulfide couples Cys-783 to Cys-833. Cys-879 and Cys-926 are oxidised to a cystine. Cys-1071 and Cys-1118 are oxidised to a cystine. Residues Asn-1131 and Asn-1207 are each glycosylated (N-linked (GlcNAc...) asparagine). Residues Cys-1167 and Cys-1210 are joined by a disulfide bond.

Interacts with INHA; the interaction is not confirmed by standard receptor binding assays. Interacts with ACVR1B; the interaction appears to be ligand-dependent as it is diminished by inhibin B and activin A. Interacts with ACVR2A, ACVR2B, ACVRL1 and BMPR1B. Interacts with HECTD1. In terms of tissue distribution, expressed in pituitary gland, testis and liver. Isoform 2 is expressed pituitary gland and testis.

Its subcellular location is the membrane. It is found in the secreted. In terms of biological role, seems to be a coreceptor in inhibin signaling, but seems not to be a high-affinity inhibin receptor. Antagonizes activin A signaling in the presence or absence of inhibin B. Necessary to mediate a specific antagonistic effect of inhibin B on activin-stimulated transcription. In Rattus norvegicus (Rat), this protein is Immunoglobulin superfamily member 1 (Igsf1).